The primary structure comprises 222 residues: N-(5'-phosphoribosyl)anthranilate isomerase (222 aa).

Belongs to the TrpF family.

It catalyses the reaction N-(5-phospho-beta-D-ribosyl)anthranilate = 1-(2-carboxyphenylamino)-1-deoxy-D-ribulose 5-phosphate. It functions in the pathway amino-acid biosynthesis; L-tryptophan biosynthesis; L-tryptophan from chorismate: step 3/5. This is N-(5'-phosphoribosyl)anthranilate isomerase from Symbiobacterium thermophilum (strain DSM 24528 / JCM 14929 / IAM 14863 / T).